Consider the following 377-residue polypeptide: MVWVRRWGTTHLENQSRYHIQQSQRYQVKQYLTLDTKLSSQTLSLSHSHTVQPTGVTSIFRNGHMPPVSDIGTPESPVTKLLALGGEHENAMEEVIEDIINMESSFNDEGIGCSETPLLMQRTSILDIYNSDQGMAPANMSLTNASCPANLPVKRELTADTRAMAKERQKKDNHNLIERRRRYNINYRIKELGTLIPKSNDPDMRWNKGTILKASVEYIKWLQKEQQRARELEHRQKKLEHANRRLLLRIQELEIQARAHGLPVMSSLSAVDLAAQVIKQQSYPEENSVDYSQQMPLAHGPNSDVCDGSTAFSDPLSHFTDLSFSAALKEEQQLEEILLDDTVSPFGADPLLSSTSPAASKESSRRSSFSTDDGDDL.

One can recognise a bHLH domain in the interval Gln169 to Leu222. Residues Asp349–Leu377 form a disordered region. Residues Ser353–Ser370 show a composition bias toward low complexity.

The protein belongs to the MiT/TFE family.

The protein localises to the nucleus. Functionally, transcriptional regulator that acts as a repressor or an activator. Binds DNA. The sequence is that of Transcription factor EC (TFEC) from Gallus gallus (Chicken).